Reading from the N-terminus, the 391-residue chain is Ferrochelatase (391 aa).

Fe cation contacts are provided by histidine 196 and glutamate 281.

The protein belongs to the ferrochelatase family.

It is found in the cytoplasm. The catalysed reaction is heme b + 2 H(+) = protoporphyrin IX + Fe(2+). Its pathway is porphyrin-containing compound metabolism; protoheme biosynthesis; protoheme from protoporphyrin-IX: step 1/1. In terms of biological role, catalyzes the ferrous insertion into protoporphyrin IX. This chain is Ferrochelatase, found in Prochlorococcus marinus (strain MIT 9301).